The primary structure comprises 417 residues: Protein FAM181B (417 aa).

The tract at residues 104–147 (CSGLMGTAPPRPASPSAADAPAKRPPGAPTVATPAHCKAAPRRE) is disordered.

Belongs to the FAM181 family.

This is Protein FAM181B (Fam181b) from Mus musculus (Mouse).